A 288-amino-acid polypeptide reads, in one-letter code: Plasmodesmata-located protein 6 (288 aa).

Positions 1 to 22 (MFATKTVLFIAVVSLLGTFSSA) are cleaved as a signal peptide. The Extracellular portion of the chain corresponds to 23-256 (AVDTFIYGGC…NNDDDEIEKT (234 aa)). 2 Gnk2-homologous domains span residues 25–132 (DTFI…NTTF) and 137–234 (DKTV…ARGG). Intrachain disulfides connect Cys32–Cys110, Cys84–Cys95, Cys98–Cys123, Cys145–Cys212, Cys188–Cys197, and Cys200–Cys225. Residues 257–277 (LAIIVGLIAGVTLLVVFLSFM) traverse the membrane as a helical segment. Positions 257 to 277 (LAIIVGLIAGVTLLVVFLSFM) are necessary and sufficient for plasmodesmal targeting. The Cytoplasmic portion of the chain corresponds to 278–288 (AKSCERGKGGK).

Belongs to the cysteine-rich repeat secretory protein family. Plasmodesmata-located proteins (PDLD) subfamily. (Microbial infection) Interacts with Grapevine fanleaf virus (GFLV) 2B-MP. Highly expressed in inflorescence silique (at mRNA level).

The protein localises to the cell membrane. It is found in the cell junction. Its subcellular location is the plasmodesma. Its function is as follows. Modulates cell-to-cell trafficking. This chain is Plasmodesmata-located protein 6, found in Arabidopsis thaliana (Mouse-ear cress).